A 232-amino-acid chain; its full sequence is Ubiquinone biosynthesis O-methyltransferase (232 aa).

S-adenosyl-L-methionine-binding residues include Arg-36, Gly-55, Asp-76, and Met-120.

This sequence belongs to the methyltransferase superfamily. UbiG/COQ3 family.

It carries out the reaction a 3-demethylubiquinol + S-adenosyl-L-methionine = a ubiquinol + S-adenosyl-L-homocysteine + H(+). The enzyme catalyses a 3-(all-trans-polyprenyl)benzene-1,2-diol + S-adenosyl-L-methionine = a 2-methoxy-6-(all-trans-polyprenyl)phenol + S-adenosyl-L-homocysteine + H(+). Its pathway is cofactor biosynthesis; ubiquinone biosynthesis. O-methyltransferase that catalyzes the 2 O-methylation steps in the ubiquinone biosynthetic pathway. The chain is Ubiquinone biosynthesis O-methyltransferase from Burkholderia thailandensis (strain ATCC 700388 / DSM 13276 / CCUG 48851 / CIP 106301 / E264).